The primary structure comprises 157 residues: Ribosomal RNA large subunit methyltransferase H (157 aa).

S-adenosyl-L-methionine-binding positions include leucine 73, glycine 105, and 124-129 (LSKMTF).

Belongs to the RNA methyltransferase RlmH family. As to quaternary structure, homodimer.

The protein resides in the cytoplasm. The catalysed reaction is pseudouridine(1915) in 23S rRNA + S-adenosyl-L-methionine = N(3)-methylpseudouridine(1915) in 23S rRNA + S-adenosyl-L-homocysteine + H(+). In terms of biological role, specifically methylates the pseudouridine at position 1915 (m3Psi1915) in 23S rRNA. This is Ribosomal RNA large subunit methyltransferase H from Christiangramia forsetii (strain DSM 17595 / CGMCC 1.15422 / KT0803) (Gramella forsetii).